A 235-amino-acid polypeptide reads, in one-letter code: Uracil-DNA glycosylase (235 aa).

Residue Asp-71 is the Proton acceptor of the active site.

It belongs to the uracil-DNA glycosylase (UDG) superfamily. UNG family.

Its subcellular location is the cytoplasm. The enzyme catalyses Hydrolyzes single-stranded DNA or mismatched double-stranded DNA and polynucleotides, releasing free uracil.. Functionally, excises uracil residues from the DNA which can arise as a result of misincorporation of dUMP residues by DNA polymerase or due to deamination of cytosine. This chain is Uracil-DNA glycosylase, found in Helicobacter hepaticus (strain ATCC 51449 / 3B1).